The primary structure comprises 634 residues: MDCEGTDGEGLGCTGWFSVEAIVEKHTGETISEDEIEYSSDTGSDLIGFIDDSNISDGAEQQVAQALFQAQETQANKKAVRALKRKLLGSQNSPLQDITNQSNSQQSTDEVNNLQAKRRAVDSVPDSGYGYTEVETLTPVQVDKHNEQNGDSVCSQGGSSGSVSDMEVDIGAQASSVTKICELLKCSNVKAALLSKFKTVYGVSYTELVRVFKSDKTCCSDWVCAAFGVAGSVAESLKTLIQPYCLYYHIQCLTCNWGVLPLMLIRFTCAKNRATIKKCLCTLLNVPDTQLLIEPPKLRSTAVALYFYKTGLSNISETHGDTPEWIVRQTQLEHSFEDTIFDLSKMVQWAFDHDITDDSEIAFKYAQLADIESNAAAFLKSNCQAKYVKDCATMTRHYKRAQKRSMGMSQWLQHRCSKIEDGGTWKDIARFLRYQNVNFIYFLQVLKQFLKGTPKHNCIVIYGPPNTGKSQFAMSFIKFVQGSVISYVNSNSHFWLQPLEDAKVALLDDATYGCWLYIDKYLRNFLDGNPCCIDRKHRSLIQVRCPPLIITSNINPQDDNSLMYLHSRVTVIPFPNTFPFDSNGNPVYELTDVNWKSFFSTTWSRLDLEEDADKENGEPLPAFKCVPGENTRLL.

Residues 84-86 (KRK) carry the Nuclear localization signal motif. S90 carries the phosphoserine; by host modification. Polar residues predominate over residues 91-115 (QNSPLQDITNQSNSQQSTDEVNNLQ). Residues 91–128 (QNSPLQDITNQSNSQQSTDEVNNLQAKRRAVDSVPDSG) are disordered. Positions 172 to 338 (AQASSVTKIC…QTQLEHSFED (167 aa)) are DNA-binding region. Residues 437–587 (VNFIYFLQVL…FPFDSNGNPV (151 aa)) form the SF3 helicase domain. 463–470 (GPPNTGKS) is a binding site for ATP.

Belongs to the papillomaviridae E1 protein family. In terms of assembly, can form hexamers. Interacts with E2 protein; this interaction increases E1 DNA binding specificity. Interacts with host DNA polymerase subunit POLA2. Interacts with host single stranded DNA-binding protein RPA1. Interacts with host TOP1; this interaction stimulates the enzymatic activity of TOP1. In terms of processing, phosphorylated.

It is found in the host nucleus. It carries out the reaction Couples ATP hydrolysis with the unwinding of duplex DNA by translocating in the 3'-5' direction.. It catalyses the reaction ATP + H2O = ADP + phosphate + H(+). In terms of biological role, ATP-dependent DNA 3'-5' helicase required for initiation of viral DNA replication. It forms a complex with the viral E2 protein. The E1-E2 complex binds to the replication origin which contains binding sites for both proteins. During the initial step, a dimer of E1 interacts with a dimer of protein E2 leading to a complex that binds the viral origin of replication with high specificity. Then, a second dimer of E1 displaces the E2 dimer in an ATP-dependent manner to form the E1 tetramer. Following this, two E1 monomers are added to each half of the site, which results in the formation of two E1 trimers on the viral ori. Subsequently, two hexamers will be created. The double hexamer acts as a bi-directional helicase machinery and unwinds the viral DNA and then recruits the host DNA polymerase to start replication. In Human papillomavirus 69, this protein is Replication protein E1.